The sequence spans 199 residues: Recombination protein RecR (199 aa).

Residues 57-72 form a C4-type zinc finger; it reads CSICGNITESDPCMIC. Residues 80-176 form the Toprim domain; it reads SKVVVVEQPK…KVTRLAHGLA (97 aa).

It belongs to the RecR family.

Functionally, may play a role in DNA repair. It seems to be involved in an RecBC-independent recombinational process of DNA repair. It may act with RecF and RecO. The protein is Recombination protein RecR of Ligilactobacillus salivarius (strain UCC118) (Lactobacillus salivarius).